The sequence spans 499 residues: Rhamnogalacturonate lyase A (499 aa).

A signal peptide spans 1-20 (MLSKTSLLSLLSLAAGVVNA). Intrachain disulfides connect Cys49-Cys92 and Cys183-Cys192.

This sequence belongs to the polysaccharide lyase 4 family.

Its subcellular location is the secreted. The catalysed reaction is Endotype eliminative cleavage of L-alpha-rhamnopyranosyl-(1-&gt;4)-alpha-D-galactopyranosyluronic acid bonds of rhamnogalacturonan I domains in ramified hairy regions of pectin leaving L-rhamnopyranose at the reducing end and 4-deoxy-4,5-unsaturated D-galactopyranosyluronic acid at the non-reducing end.. Functionally, pectinolytic enzymes consist of four classes of enzymes: pectin lyase, polygalacturonase, pectin methylesterase and rhamnogalacturonase. Degrades the rhamnogalacturonan I (RG-I) backbone of pectin. The chain is Rhamnogalacturonate lyase A (rglA) from Aspergillus niger.